The chain runs to 783 residues: Heat shock transcription factor (783 aa).

The tract at residues 1–59 is disordered; it reads MTTNLYAIAGPSKPTTPTSTPSPRSEPPSPLKSLTSLPTNPLNSHGTSTPNTLTNQLSS. Low complexity-rich tracts occupy residues 11-23 and 31-42; these read PSKP…TPSP and LKSLTSLPTNPL. Residues 43–59 show a composition bias toward polar residues; sequence NSHGTSTPNTLTNQLSS. Residues 78–168 mediate DNA binding; the sequence is MKVPAFLNKL…PIELWEFANP (91 aa). The segment at 181-262 is disordered; sequence VTRKNNRPSN…PGSVPPSHTS (82 aa). Composition is skewed to low complexity over residues 189–199 and 209–233; these read SNSGVGPSSSV and STRS…ISQG. The segment covering 238–262 has biased composition (polar residues); that stretch reads NHSTSGKYLITDGTTPGSVPPSHTS. The interval 280-333 is involved in trimerization; it reads GIAAIRQTQASIATDLRKLQASNEALWRQAYETQEKQRKHEETIDLIVSFLERL. 2 stretches are compositionally biased toward basic and acidic residues: residues 350–372 and 399–415; these read RGVG…SRFA and TGEH…DRLV. 3 disordered regions span residues 350–554, 599–652, and 736–783; these read RGVG…LLSP, QALA…TLAL, and QGLA…KSES. Residues 418–448 are compositionally biased toward polar residues; that stretch reads GSNSEYSIPSVKRTSSSSHPISLGQLGSSRF. Low complexity-rich tracts occupy residues 452 to 467, 497 to 511, 522 to 550, and 616 to 632; these read PSED…GSTS, LSPL…PSSS, PFPS…PSQP, and NPNG…AHGM. Positions 742-752 are enriched in acidic residues; it reads GEEEGEREVEG. The segment covering 753–765 has biased composition (gly residues); it reads DGGVSSSGAGAGA.

Belongs to the HSF family. As to quaternary structure, homotrimer. Homotrimerization increases the affinity of HSF1 to DNA. Interacts with transcriptional coregulator SSA1 on chromatin.

It is found in the nucleus. Its function is as follows. DNA-binding transcription factor that specifically binds heat shock promoter elements (HSE) and activates transcription. Together with its coregulator SSA1, activates expression of laccase LAC1 during glucose starvation. This is Heat shock transcription factor from Cryptococcus neoformans var. neoformans serotype D (strain JEC21 / ATCC MYA-565) (Filobasidiella neoformans).